The primary structure comprises 407 residues: DNA-directed RNA polymerase subunit Rpo1C (407 aa).

Belongs to the RNA polymerase beta' chain family. As to quaternary structure, part of the RNA polymerase complex.

The protein resides in the cytoplasm. It carries out the reaction RNA(n) + a ribonucleoside 5'-triphosphate = RNA(n+1) + diphosphate. Its function is as follows. DNA-dependent RNA polymerase (RNAP) catalyzes the transcription of DNA into RNA using the four ribonucleoside triphosphates as substrates. Forms part of the jaw domain. The sequence is that of DNA-directed RNA polymerase subunit Rpo1C from Aeropyrum pernix (strain ATCC 700893 / DSM 11879 / JCM 9820 / NBRC 100138 / K1).